Consider the following 341-residue polypeptide: Putative NADPH-dependent methylglyoxal reductase GRP2 (341 aa).

NADP(+) contacts are provided by Lys-40 and Tyr-171.

It belongs to the NAD(P)-dependent epimerase/dehydratase family. Dihydroflavonol-4-reductase subfamily.

The protein localises to the cytoplasm. The catalysed reaction is (S)-lactaldehyde + NADP(+) = methylglyoxal + NADPH + H(+). Its function is as follows. Catalyzes the irreversible reduction of the cytotoxic compound methylglyoxal (MG, 2-oxopropanal) to (S)-lactaldehyde. MG is synthesized via a bypath of glycolysis from dihydroxyacetone phosphate and is believed to play a role in cell cycle regulation and stress adaptation. The chain is Putative NADPH-dependent methylglyoxal reductase GRP2 (GRP2) from Candida albicans (strain SC5314 / ATCC MYA-2876) (Yeast).